The primary structure comprises 493 residues: Phospholipid transfer protein (493 aa).

Positions 1 to 17 are cleaved as a signal peptide; it reads MVLLWALFLALLAGAHA. Residues Asn-64, Asn-91, Asn-94, Asn-117, and Asn-143 are each glycosylated (N-linked (GlcNAc...) asparagine). Cys-146 and Cys-185 are joined by a disulfide. Asn-245 and Asn-398 each carry an N-linked (GlcNAc...) asparagine glycan.

This sequence belongs to the BPI/LBP/Plunc superfamily. BPI/LBP family. Post-translationally, glycosylation is necessary for secretion and its phospholipid transfer activity. Highest level expression in the lung, brain and heart with relatively low levels in the liver, skeletal muscle and testis and very low levels found in the spleen and kidney.

Its subcellular location is the secreted. The protein resides in the nucleus. The catalysed reaction is a 1,2-diacyl-sn-glycero-3-phosphocholine(in) = a 1,2-diacyl-sn-glycero-3-phosphocholine(out). The enzyme catalyses a 1,2-diacyl-sn-glycero-3-phosphoethanolamine(in) = a 1,2-diacyl-sn-glycero-3-phosphoethanolamine(out). It catalyses the reaction a 1,2-diacyl-sn-glycerol(in) = a 1,2-diacyl-sn-glycerol(out). It carries out the reaction a 1,2-diacyl-sn-glycero-3-phosphate(in) = a 1,2-diacyl-sn-glycero-3-phosphate(out). The catalysed reaction is a sphingomyelin(in) = a sphingomyelin(out). The enzyme catalyses a 1,2-diacyl-sn-glycero-3-phospho-(1'-sn-glycerol)(in) = a 1,2-diacyl-sn-glycero-3-phospho-(1'-sn-glycerol)(out). It catalyses the reaction a 1,2-diacyl-sn-glycero-3-phospho-(1D-myo-inositol)(in) = a 1,2-diacyl-sn-glycero-3-phospho-(1D-myo-inositol)(out). It carries out the reaction 1-hexadecanoyl-2-(5Z,8Z,11Z,14Z-eicosatetraenoyl)-sn-glycero-3-phosphoethanolamine(in) = 1-hexadecanoyl-2-(5Z,8Z,11Z,14Z-eicosatetraenoyl)-sn-glycero-3-phosphoethanolamine(out). The catalysed reaction is N-(hexadecanoyl)-sphing-4-enine-1-phosphocholine(in) = N-(hexadecanoyl)-sphing-4-enine-1-phosphocholine(out). The enzyme catalyses 1,2-dihexadecanoyl-sn-glycero-3-phosphocholine(in) = 1,2-dihexadecanoyl-sn-glycero-3-phosphocholine(out). Its function is as follows. Mediates the transfer of phospholipids and free cholesterol from triglyceride-rich lipoproteins (low density lipoproteins or LDL and very low density lipoproteins or VLDL) into high-density lipoproteins (HDL) as well as the exchange of phospholipids between triglyceride-rich lipoproteins themselves. Facilitates the transfer of a spectrum of different lipid molecules, including sphingomyelin, phosphatidylcholine, phosphatidylinositol, phosphatidylglycerol, and phosphatidyl ethanolamine. Plays an important role in HDL remodeling which involves modulating the size and composition of HDL. Also plays a key role in the uptake of cholesterol from peripheral cells and tissues that is subsequently transported to the liver for degradation and excretion. Two distinct forms of PLTP exist in plasma: an active form that can transfer phosphatidylcholine from phospholipid vesicles to HDL, and an inactive form that lacks this capability. The polypeptide is Phospholipid transfer protein (Pltp) (Mus musculus (Mouse)).